The sequence spans 1902 residues: PII-type proteinase (1902 aa).

Residues 1-33 form the signal peptide; the sequence is MQRKKKGLSILLAGTVALGALAVLPVGEIQAKA. The propeptide occupies 34-187; the sequence is AISQQTKVSS…VTLAKVYYPT (154 aa). In terms of domain architecture, Peptidase S8 spans 191–697; that stretch reads ANSMANVQAV…AGLVDVKAAI (507 aa). Active-site charge relay system residues include D217, H281, and S620. The span at 1793-1805 shows a compositional bias: low complexity; that stretch reads KTAGKGDDTTGTS. The disordered stretch occupies residues 1793 to 1872; the sequence is KTAGKGDDTT…GKGALPKTAE (80 aa). An LPXTG sorting signal motif is present at residues 1867–1871; it reads LPKTA. T1870 is subject to Pentaglycyl murein peptidoglycan amidated threonine. Positions 1871 to 1902 are cleaved as a propeptide — removed by sortase; it reads AETTERPAFGFLGVIVVSLMGVLGLKRKQREE.

The protein belongs to the peptidase S8 family.

It is found in the secreted. The protein localises to the cell wall. The catalysed reaction is Endopeptidase activity with very broad specificity, although some subsite preference have been noted, e.g. large hydrophobic residues in the P1 and P4 positions, and Pro in the P2 position. Best known for its action on caseins, although it has been shown to hydrolyze hemoglobin and oxidized insulin B-chain.. Protease which breaks down milk proteins during the growth of the bacteria on milk. This chain is PII-type proteinase (prtP), found in Lacticaseibacillus paracasei (Lactobacillus paracasei).